A 665-amino-acid polypeptide reads, in one-letter code: Glycine--tRNA ligase beta subunit (665 aa).

Belongs to the class-II aminoacyl-tRNA synthetase family. Tetramer of two alpha and two beta subunits.

It is found in the cytoplasm. The catalysed reaction is tRNA(Gly) + glycine + ATP = glycyl-tRNA(Gly) + AMP + diphosphate. The protein is Glycine--tRNA ligase beta subunit (glyS) of Rickettsia prowazekii (strain Madrid E).